Reading from the N-terminus, the 227-residue chain is ATP synthase F(0) complex subunit a (227 aa).

Helical transmembrane passes span 14 to 34 (FLGI…IPTP), 73 to 93 (LASL…PYIF), 98 to 118 (QLSL…LIGM), 137 to 157 (ALIP…PLAL), 179 to 199 (VFVL…LLLL), and 203 to 223 (LEVA…SLYL).

The protein belongs to the ATPase A chain family. As to quaternary structure, component of the ATP synthase complex composed at least of ATP5F1A/subunit alpha, ATP5F1B/subunit beta, ATP5MC1/subunit c (homooctomer), MT-ATP6/subunit a, MT-ATP8/subunit 8, ATP5ME/subunit e, ATP5MF/subunit f, ATP5MG/subunit g, ATP5MK/subunit k, ATP5MJ/subunit j, ATP5F1C/subunit gamma, ATP5F1D/subunit delta, ATP5F1E/subunit epsilon, ATP5PF/subunit F6, ATP5PB/subunit b, ATP5PD/subunit d, ATP5PO/subunit OSCP. ATP synthase complex consists of a soluble F(1) head domain (subunits alpha(3) and beta(3)) - the catalytic core - and a membrane F(0) domain - the membrane proton channel (subunits c, a, 8, e, f, g, k and j). These two domains are linked by a central stalk (subunits gamma, delta, and epsilon) rotating inside the F1 region and a stationary peripheral stalk (subunits F6, b, d, and OSCP). Interacts with DNAJC30; interaction is direct.

It localises to the mitochondrion inner membrane. It catalyses the reaction H(+)(in) = H(+)(out). In terms of biological role, subunit a, of the mitochondrial membrane ATP synthase complex (F(1)F(0) ATP synthase or Complex V) that produces ATP from ADP in the presence of a proton gradient across the membrane which is generated by electron transport complexes of the respiratory chain. ATP synthase complex consist of a soluble F(1) head domain - the catalytic core - and a membrane F(1) domain - the membrane proton channel. These two domains are linked by a central stalk rotating inside the F(1) region and a stationary peripheral stalk. During catalysis, ATP synthesis in the catalytic domain of F(1) is coupled via a rotary mechanism of the central stalk subunits to proton translocation. With the subunit c (ATP5MC1), forms the proton-conducting channel in the F(0) domain, that contains two crucial half-channels (inlet and outlet) that facilitate proton movement from the mitochondrial intermembrane space (IMS) into the matrix. Protons are taken up via the inlet half-channel and released through the outlet half-channel, following a Grotthuss mechanism. This chain is ATP synthase F(0) complex subunit a, found in Gadus morhua (Atlantic cod).